We begin with the raw amino-acid sequence, 207 residues long: M-zodatoxin-Lt4a (207 aa).

The first 22 residues, 1 to 22, serve as a signal peptide directing secretion; that stretch reads MKFSIIALALAVAFVCVAESRS. A propeptide spanning residues 23–43 is cleaved from the precursor; sequence EEEGYDVSEEIQAEELEEAER. Residues 40–43 carry the Processing quadruplet motif 1 motif; that stretch reads EAER. Glutamine amide is present on Gln61. The short motif at 63-66 is the Inverted processing quadruplet motif 1 element; the sequence is REDS. Residues 63 to 71 constitute a propeptide that is removed on maturation; that stretch reads REDSEEAGR. The Processing quadruplet motif 2 motif lies at 68–71; that stretch reads EAGR. Gln89 is subject to Glutamine amide. Residues 91–94 carry the Inverted processing quadruplet motif 2 motif; sequence REDS. Residues 91-99 constitute a propeptide that is removed on maturation; that stretch reads REDSEEAGR. The short motif at 96 to 99 is the Processing quadruplet motif 3 element; the sequence is EAGR. Residue Gln117 is modified to Glutamine amide. The short motif at 119 to 122 is the Inverted processing quadruplet motif 3 element; it reads REDS. The propeptide occupies 119–127; it reads REDSEEAGR. The Processing quadruplet motif 4 signature appears at 124–127; sequence EAGR. Gln145 carries the glutamine amide modification. The short motif at 147–150 is the Inverted processing quadruplet motif 4 element; that stretch reads REDS. The propeptide occupies 147-155; that stretch reads REDSEEAGR. Residues 152-155 carry the Processing quadruplet motif 5 motif; the sequence is EAGR. Gln173 is modified (glutamine amide). Positions 175–178 match the Inverted processing quadruplet motif 5 motif; sequence REDT. A propeptide spanning residues 175-182 is cleaved from the precursor; that stretch reads REDTEEAR. A Processing quadruplet motif 6 motif is present at residues 179 to 182; that stretch reads EEAR. Phe206 is modified (phenylalanine amide).

This sequence belongs to the cationic peptide 03 (latarcin) family. 04 subfamily. Cleavage of the propeptide depends on the processing quadruplet motif (PQM) (XXXR, with at least one of X being E) and the inverted PQM (RXXX, with at least one of X being E). Expressed by the venom gland.

Its subcellular location is the secreted. In terms of biological role, M-zodatoxin-Lt4a: Has antimicrobial activity against Gram-positive bacteria (A.globiformis VKM Ac-1112 (MIC=0.3 uM), and B.subtilis VKM B-501 (MIC=1.1 uM)), Gram-negative bacteria (E.coli DH5-alpha (MIC=4.5 uM), E.coli MH1 (MIC=3.2 uM), and P.aeruginosa PAO1 (MIC&gt;35 uM)), and yeasts (P.pastoris GS115 (MIC=36 uM), and S.cerevisiae Y190 (MIC=18 uM)). Does not have hemolytic activity against rabbit erythrocytes. Causes paralysis, but is not lethal when injected into insect (M.domestica) larvae. Functionally, shows no antimicrobial activity against Gram-positive bacterium B.subtilis B-501 or Gram-negative bacterium E.coli DH5-alpha at concentrations up to 20 uM. Its function is as follows. Shows no antimicrobial activity against Gram-positive bacterium B.subtilis B-501 or Gram-negative bacterium E.coli DH5-alpha at concentrations up to 20 uM. Shows no toxicity towards insect (S.carnaria) larvae. This is M-zodatoxin-Lt4a from Lachesana tarabaevi (Spider).